The sequence spans 137 residues: Putative pre-16S rRNA nuclease (137 aa).

It belongs to the YqgF nuclease family.

The protein localises to the cytoplasm. Could be a nuclease involved in processing of the 5'-end of pre-16S rRNA. In Clostridium kluyveri (strain NBRC 12016), this protein is Putative pre-16S rRNA nuclease.